The sequence spans 1819 residues: MSLSQQLKQINEKSASVALDRKSRSKLHSKSLIFAPKVAATQDYDYLHSVGVDGLTELCTIDSRFLKFQQTLFADSTVNFDRNVQTKEIVDNLDASIAAFLNLVSPFYPLSPAVKAVEWLVRRFYINIHNSEALILTCLPHYQSQIFARVMNVIPKSSWPPIFNWLNGYRDMSKNPPSSSILKAFRNDYQLFKLYSEYITQQVSVETVYKEQLVFYLTNTIQLLASYSTDIEKLNEVYLPVILEVIGKFLLASNTSLDHDIKIAAYTLMSVVVSLVPLADDVHISLTRSILQVPGAFDPQLKRQTMIILAQTWQRYTGAKFDFEFFNTIPLDSLLKDNLLESLVHEGFDFNNFLLALISSTNDKRTLSLAKLFKIERANEAVATTFISRLIDAASFKPDTEARASIVAAFEAMLAGSRDTLVEYLGSKKEPMSLADLEMVLLTTLSSSDVDDSEINVAQSDEVQEANGSSNSEPVTLDGVKSHTKSFLFQCEDFNDLSRLLVSFLAPFESNSYANQIAKFCAAVFTGPNASITFTLRCSLTPIIPLKVRLACLICLKRKLKELAKSGDTKLHLILPILILGLYDDHQSIRAGFAESIHSLSTPSASKNASIFLEDEMYADVAASNKVLISPKDGDSLINLLTSTDSLLKETVLDKTRLVSVLFEVVFKAQQPSKKFGLVCQTFFIAQWSQLPFAAVFKSLIFKIMSGRNITAECPSRESFIKGDVAGLFSGYEAWMASAQESKLDFESDIVSPLVNLVGGQDELSTPNSSEIDEVGWLIKATDFTKCPVIQVAATKRVTQVFEFLKPEDKVRLYSKFIELQASDDELNFDAQEILQAMPLDFNSALTLLKNFQLVAQIPEQQIPKRRRRSSNSSKQTMAHEELVSIASVHLRKLTIVLDLLEYNLRKNLKEIKPELLSSFFGILTDLEYLGHDGDMPVLYTQEVLATCMLLAVKHIKAINENGSGRISIDSNSVRADLIVNTIRSSNSPQIQNRLLLVIAELASLAPEIILHSVMPIFTFMGAHTIRQDDEFSSFALQDTIAKVVPALAKSGASSFSNEIEFLLTSFVTAFQHIPRHRRVKLFSSLSKTLGAGNSIHTILFLSGVQYASLFGKGKHGDCLSLLEFTQGYMKQFQASEQLSAIHKFCTLWQLVPTKPLDPDSDEFRNLNSRPIFGASILSLNDTELVELKAGLITFIDSLLQTDEESVGYLQLRVNQLLLDSHSTDGEKTIIIDGCKNVASLLLGSLDNFGQVSKMTKVSDNLYQFLDDILSLLPLVYFLDSIIDVLKNPMGVDRVAINFARLAGNKIENELTASNLDEQIQFSLFEKLVPVLISGIKSNQDAEISQAYMDATAQAVAKLGNCTTCFNEAKNVSVLNECLSILTSESGLKSSKPECIISSMNCISSIINIMGVKAIGFFPKIFEPTVEIWKTTKTNEEDMQLVQTSVLLLFAQLVKKLPAFVTSKLDSIFTCTIGSLAVDATVRSSILSSIVEYVDTAYVLKALCNVWGEISKSDNAEVIGLYLGAMEKTIDQLEKKSAISQATLFIKWMIKAFEFRSSVSKSSQDFDTNTIHRLESSFHSCGLRYVMKLNDKTFRPLFAGLVRWAVNGEGSTSDTDEVSRYIAFFRFFNKVQEQLKSIITSYYSYLIDPVSSLLKRIDTMEDSINLKRMVFNSLTSSFKYDQDDFWSQPSRFESICGPLLQQIPTIENSIGKYLVKCVSAFVVNVSSEEHNEKLVHGLIHYISNEHSTTNSHTKTWTIRILKSVFQKMGDQWLSYLPTLIPYIAELLEDDDEDVELEVRKGLVKVLENVLGEPLDRYLN.

The stretch at 1779–1817 is one HEAT repeat; the sequence is LIPYIAELLEDDDEDVELEVRKGLVKVLENVLGEPLDRY.

Belongs to the HEATR1/UTP10 family. In terms of assembly, component of the ribosomal small subunit (SSU) processome.

The protein resides in the nucleus. The protein localises to the nucleolus. Its function is as follows. Involved in nucleolar processing of pre-18S ribosomal RNA. Involved in ribosome biosynthesis. This is U3 small nucleolar RNA-associated protein 10 from Meyerozyma guilliermondii (strain ATCC 6260 / CBS 566 / DSM 6381 / JCM 1539 / NBRC 10279 / NRRL Y-324) (Yeast).